The sequence spans 266 residues: Type II pantothenate kinase (266 aa).

6–13 provides a ligand contact to ATP; the sequence is DAGGTLIK. The active-site Proton acceptor is E70. Residues T99, 121 to 125, Y137, and S225 each bind ATP; that span reads GGMIQ.

Belongs to the type II pantothenate kinase family. Homodimer.

The protein localises to the cytoplasm. It catalyses the reaction (R)-pantothenate + ATP = (R)-4'-phosphopantothenate + ADP + H(+). It participates in cofactor biosynthesis; coenzyme A biosynthesis; CoA from (R)-pantothenate: step 1/5. Catalyzes the phosphorylation of pantothenate (Pan), the first step in CoA biosynthesis. The chain is Type II pantothenate kinase from Staphylococcus haemolyticus (strain JCSC1435).